The primary structure comprises 61 residues: Protein translocase subunit SecE (61 aa).

A helical transmembrane segment spans residues 38 to 58 (GIGMILIGTIGMIIRIIGYLV).

It belongs to the SecE/SEC61-gamma family. Component of the Sec protein translocase complex. Heterotrimer consisting of SecY (alpha), SecG (beta) and SecE (gamma) subunits. The heterotrimers can form oligomers, although 1 heterotrimer is thought to be able to translocate proteins. Interacts with the ribosome. May interact with SecDF, and other proteins may be involved.

The protein localises to the cell membrane. Its function is as follows. Essential subunit of the Sec protein translocation channel SecYEG. Clamps together the 2 halves of SecY. May contact the channel plug during translocation. The polypeptide is Protein translocase subunit SecE (Thermococcus kodakarensis (strain ATCC BAA-918 / JCM 12380 / KOD1) (Pyrococcus kodakaraensis (strain KOD1))).